Reading from the N-terminus, the 71-residue chain is Conotoxin TxMMSK-05 (71 aa).

Positions 1-20 are cleaved as a signal peptide; that stretch reads MMSKLGALLIICLLLFPLTA. Positions 21-52 are excised as a propeptide; sequence VPLDGDQHADRPAERLQDDISSKHHPMFDAVR. 3 disulfides stabilise this stretch: C54–C70, C55–C66, and C60–C69.

Belongs to the conotoxin M superfamily. As to expression, expressed by the venom duct.

The protein localises to the secreted. In Conus textile (Cloth-of-gold cone), this protein is Conotoxin TxMMSK-05.